The following is a 126-amino-acid chain: Histone H2B type 1-H (126 aa).

Low complexity predominate over residues 1–12 (MPEPAKSAPAPK). The interval 1-36 (MPEPAKSAPAPKKGSKKALTKAQKKDGKKRKRSRKE) is disordered. Pro2 carries the post-translational modification N-acetylproline. The residue at position 3 (Glu3) is an ADP-ribosyl glutamic acid. At Lys6 the chain carries N6-(2-hydroxyisobutyryl)lysine; alternate. Lys6 carries the post-translational modification N6-(beta-hydroxybutyryl)lysine; alternate. An N6-acetyllysine; alternate modification is found at Lys6. N6-butyryllysine; alternate is present on Lys6. An N6-crotonyllysine; alternate modification is found at Lys6. N6-lactoyllysine; alternate is present on Lys6. Lys6 is covalently cross-linked (Glycyl lysine isopeptide (Lys-Gly) (interchain with G-Cter in SUMO2); alternate). At Ser7 the chain carries ADP-ribosylserine. Lys12 carries the post-translational modification N6-(beta-hydroxybutyryl)lysine; alternate. Residues Lys12 and Lys13 each carry the N6-acetyllysine; alternate modification. Residues Lys12 and Lys13 each carry the N6-crotonyllysine; alternate modification. Lys12 carries the post-translational modification N6-lactoyllysine; alternate. Lys13 is modified (N6-(2-hydroxyisobutyryl)lysine; alternate). Ser15 carries the phosphoserine; by STK4/MST1 modification. An N6-acetyllysine; alternate mark is found at Lys16, Lys17, Lys21, and Lys24. Residues Lys16, Lys17, Lys21, and Lys24 each carry the N6-crotonyllysine; alternate modification. N6-lactoyllysine; alternate occurs at positions 16, 17, 21, and 24. The residue at position 17 (Lys17) is an N6-glutaryllysine; alternate. N6-(2-hydroxyisobutyryl)lysine; alternate occurs at positions 21 and 24. Lys21 is subject to N6-(beta-hydroxybutyryl)lysine; alternate. Lys21 carries the N6-butyryllysine; alternate modification. Lys21 is covalently cross-linked (Glycyl lysine isopeptide (Lys-Gly) (interchain with G-Cter in SUMO2); alternate). An N6-(2-hydroxyisobutyryl)lysine modification is found at Lys25. Position 35 is an N6-(2-hydroxyisobutyryl)lysine; alternate (Lys35). Position 35 is an N6-(beta-hydroxybutyryl)lysine; alternate (Lys35). Lys35 carries the N6-crotonyllysine; alternate modification. Lys35 carries the post-translational modification N6-glutaryllysine; alternate. Lys35 carries the N6-succinyllysine; alternate modification. Lys35 participates in a covalent cross-link: Glycyl lysine isopeptide (Lys-Gly) (interchain with G-Cter in ubiquitin); alternate. Glu36 bears the PolyADP-ribosyl glutamic acid mark. The residue at position 37 (Ser37) is a Phosphoserine; by AMPK. Residues Lys44, Lys47, and Lys58 each carry the N6-(2-hydroxyisobutyryl)lysine; alternate modification. An N6-lactoyllysine; alternate modification is found at Lys44. Lys44 and Lys47 each carry N6-glutaryllysine; alternate. Lys47 is modified (N6-methyllysine; alternate). The residue at position 58 (Lys58) is an N6,N6-dimethyllysine; alternate. Arg80 carries the dimethylated arginine modification. Lys86 carries the N6-(2-hydroxyisobutyryl)lysine; alternate modification. An N6-acetyllysine; alternate modification is found at Lys86. N6-lactoyllysine; alternate is present on Lys86. Lys86 bears the N6,N6,N6-trimethyllysine; alternate mark. Residues Arg87 and Arg93 each carry the omega-N-methylarginine modification. Lys109 bears the N6-(2-hydroxyisobutyryl)lysine; alternate mark. Lys109 carries the N6-(beta-hydroxybutyryl)lysine; alternate modification. Lys109 carries the post-translational modification N6-lactoyllysine; alternate. Lys109 is subject to N6-glutaryllysine; alternate. N6-methyllysine; alternate is present on Lys109. Ser113 carries O-linked (GlcNAc) serine glycosylation. Thr116 is modified (phosphothreonine). 2 positions are modified to N6-(2-hydroxyisobutyryl)lysine; alternate: Lys117 and Lys121. Position 117 is an N6-(beta-hydroxybutyryl)lysine; alternate (Lys117). An N6-lactoyllysine; alternate mark is found at Lys117 and Lys121. 2 positions are modified to N6-glutaryllysine; alternate: Lys117 and Lys121. An N6-succinyllysine; alternate mark is found at Lys117 and Lys121. Lys117 is modified (N6-methylated lysine; alternate). Lys121 is covalently cross-linked (Glycyl lysine isopeptide (Lys-Gly) (interchain with G-Cter in ubiquitin); alternate).

The protein belongs to the histone H2B family. In terms of assembly, the nucleosome is a histone octamer containing two molecules each of H2A, H2B, H3 and H4 assembled in one H3-H4 heterotetramer and two H2A-H2B heterodimers. The octamer wraps approximately 147 bp of DNA. Monoubiquitination at Lys-35 (H2BK34Ub) by the MSL1/MSL2 dimer is required for histone H3 'Lys-4' (H3K4me) and 'Lys-79' (H3K79me) methylation and transcription activation at specific gene loci, such as HOXA9 and MEIS1 loci. Similarly, monoubiquitination at Lys-121 (H2BK120Ub) by the RNF20/40 complex gives a specific tag for epigenetic transcriptional activation and is also prerequisite for histone H3 'Lys-4' and 'Lys-79' methylation. It also functions cooperatively with the FACT dimer to stimulate elongation by RNA polymerase II. H2BK120Ub also acts as a regulator of mRNA splicing: deubiquitination by USP49 is required for efficient cotranscriptional splicing of a large set of exons. Post-translationally, phosphorylated on Ser-15 (H2BS14ph) by STK4/MST1 during apoptosis; which facilitates apoptotic chromatin condensation. Also phosphorylated on Ser-15 in response to DNA double strand breaks (DSBs), and in correlation with somatic hypermutation and immunoglobulin class-switch recombination. Phosphorylation at Ser-37 (H2BS36ph) by AMPK in response to stress promotes transcription. In terms of processing, glcNAcylation at Ser-113 promotes monoubiquitination of Lys-121. It fluctuates in response to extracellular glucose, and associates with transcribed genes. ADP-ribosylated by PARP1 or PARP2 on Ser-7 (H2BS6ADPr) in response to DNA damage. H2BS6ADPr promotes recruitment of CHD1L. Mono-ADP-ribosylated on Glu-3 (H2BE2ADPr) by PARP3 in response to single-strand breaks. Poly ADP-ribosylation on Glu-36 (H2BE35ADPr) by PARP1 regulates adipogenesis: it inhibits phosphorylation at Ser-37 (H2BS36ph), thereby blocking expression of pro-adipogenetic genes. Post-translationally, crotonylation (Kcr) is specifically present in male germ cells and marks testis-specific genes in post-meiotic cells, including X-linked genes that escape sex chromosome inactivation in haploid cells. Crotonylation marks active promoters and enhancers and confers resistance to transcriptional repressors. It is also associated with post-meiotically activated genes on autosomes. In terms of processing, hydroxybutyrylation of histones is induced by starvation. Lactylated in macrophages by EP300/P300 by using lactoyl-CoA directly derived from endogenous or exogenous lactate, leading to stimulates gene transcription.

Its subcellular location is the nucleus. It is found in the chromosome. Functionally, core component of nucleosome. Nucleosomes wrap and compact DNA into chromatin, limiting DNA accessibility to the cellular machineries which require DNA as a template. Histones thereby play a central role in transcription regulation, DNA repair, DNA replication and chromosomal stability. DNA accessibility is regulated via a complex set of post-translational modifications of histones, also called histone code, and nucleosome remodeling. This chain is Histone H2B type 1-H, found in Mus musculus (Mouse).